A 135-amino-acid polypeptide reads, in one-letter code: Retinol-binding protein 1 (135 aa).

Omega-N-methylarginine is present on tryptophan 9. The tract at residues 22 to 32 (RALDVNVALRK) is important for interaction with STRA6. Positions 41, 63, and 109 each coordinate all-trans-retinol.

This sequence belongs to the calycin superfamily. Fatty-acid binding protein (FABP) family. As to quaternary structure, interacts (only as retinol-free apoprotein) with STRA6. As to expression, detected in nearly all the tissues with higher expression in adult ovary, pancreas, pituitary gland and adrenal gland, and fetal liver.

It localises to the cytoplasm. It is found in the lipid droplet. Cytoplasmic retinol-binding protein. Accepts retinol from the transport protein STRA6, and thereby contributes to retinol uptake, storage and retinoid homeostasis. In Homo sapiens (Human), this protein is Retinol-binding protein 1 (RBP1).